The primary structure comprises 448 residues: MEAPGEGPCSESQVIPVLEEDPVDYGCEMQLLQDGAQLQLQLQPEEFVAIADYTATDETQLSFLRGEKILILRQTTADWWWGERAGCCGYIPANHLGKQLEEYDPEDTWQDEEYFDSYGTLKLHLEMLADQPRTTKYHSVILQNKESLKDKVILDVGCGTGIISLFCAHHARPKAVYAVEASDMAQHTSQLVLQNGFADTITVFQQKVEDVVLPEKVDVLVSEWMGTCLLFEFMIESILYARDTWLKGDGIIWPTTAALHLVPCSAEKDYHSKVLFWDNAYEFNLSALKSLAIKEFFSRPKSNHILKPEDCLSEPCTILQLDMRTVQVPDLETMRGELRFDIQKAGTLHGFTAWFSVYFQSLEEGQPQQVVSTGPLHPTTHWKQTLFMMDDPVPVHTGDVVHGFCCVTKKSGMEKAHVCLSELGCHVRTRSHVSTELETGSFRSGGDS.

2 interaction with ESR1 regions span residues 1 to 289 (MEAP…SALK) and 145 to 287 (KESL…NLSA). An SH3 domain is found at 42-101 (LQPEEFVAIADYTATDETQLSFLRGEKILILRQTTADWWWGERAGCCGYIPANHLGKQLE). Arg73 and Arg84 each carry asymmetric dimethylarginine. The interval 95–219 (HLGKQLEEYD…DVVLPEKVDV (125 aa)) is interaction with RB1. The SAM-dependent MTase PRMT-type domain maps to 111–414 (DEEYFDSYGT…CCVTKKSGME (304 aa)). S-adenosyl-L-methionine is bound by residues His124, Arg133, Gly157, Glu180, and Glu209. Residues Glu223 and Glu232 contribute to the active site.

The protein belongs to the class I-like SAM-binding methyltransferase superfamily. Protein arginine N-methyltransferase family. Self-associates. Interacts with HNRNPUL1. Interacts with NFKBIA. Interacts with NCOA6 coactivator. Interacts (via SH3 domain) with PRMT8. Interacts with AR. Interacts with ESR1, ESR2, PGR, PPARG, RARA, RXRA and THRB. Interacts with RB1 and E2F1. As to expression, expressed in liver, pancreas, lung, brain, skeletal muscle, heart, muscle and fat.

The protein localises to the cytoplasm. Its subcellular location is the nucleus. The enzyme catalyses L-arginyl-[protein] + 2 S-adenosyl-L-methionine = N(omega),N(omega)-dimethyl-L-arginyl-[protein] + 2 S-adenosyl-L-homocysteine + 2 H(+). Arginine methyltransferase that methylates the guanidino nitrogens of arginyl residues in proteins such as STAT3, FBL, histone H4. May inhibit NF-kappa-B transcription, and promote apoptosis. Represses E2F1 transcriptional activity (in a RB1-dependent manner). Has a negative regulation effect on G1 to S transition of mitotic cell cycle. Involved in growth regulation. Acts as a coactivator (with NCOA2) of the androgen receptor (AR)-mediated transactivation. Acts as a coactivator (with estrogen) of estrogen receptor (ER)-mediated transactivation. Enhances PGR, PPARG, RARA-mediated transactivation. The chain is Protein arginine N-methyltransferase 2 (Prmt2) from Mus musculus (Mouse).